The following is a 291-amino-acid chain: Protease HtpX homolog (291 aa).

A run of 2 helical transmembrane segments spans residues 11–31 (INTFLILFVFILACGGFGLLA) and 34–54 (FLGMSFFLFILLLAAGYACVQ). His-140 contacts Zn(2+). Glu-141 is a catalytic residue. His-144 lines the Zn(2+) pocket. 2 consecutive transmembrane segments (helical) span residues 155 to 175 (IVFGLVSAVGLISDMVLRALI) and 186 to 206 (AFSFAIVLFFSLLAPIAAMLV). Glu-215 contacts Zn(2+).

The protein belongs to the peptidase M48B family. Requires Zn(2+) as cofactor.

The protein resides in the cell membrane. This Tropheryma whipplei (strain TW08/27) (Whipple's bacillus) protein is Protease HtpX homolog.